The chain runs to 30 residues: Dermaseptin-S3 (30 aa).

Belongs to the frog skin active peptide (FSAP) family. Dermaseptin subfamily. As to quaternary structure, monomer and oligomer. Forms aggregates in aqueous environments. In terms of tissue distribution, expressed by the skin glands.

The protein resides in the secreted. In terms of biological role, potent antimicrobial peptide with activity against bacteria and protozoa. Also has activity against fungi. Probably acts by disturbing membrane functions with its amphipathic structure. Binds to healthy erythrocytes (this binding is receptor independent), but has very weak hemolytic activity. Does not bind to P.falciparum infected erythrocytes, but accumulates within the parasite. Kills the parasite, but has no hemolytic activity on the host cell. The protein is Dermaseptin-S3 of Phyllomedusa sauvagei (Sauvage's leaf frog).